The primary structure comprises 389 residues: MGICASSEQLEHVHETDESIVYVKDEQGRGGRGVESGGARKVASLFSQRGKKGPNQDSVILCQGFGMEDGVFCGVFDGHGRCGQFISKLVRDYLPFMILSHRNALLLADAAADDDDDAAFSDDAAASSSADSSGNSSPQPSASASAQMLEEWRQACASAFAAMDGELKLQPNLDCAFSGTTAVCAIKQGRDLIIANLGDSRAVLATMSDTGYLQAVQLTVDHKPSVPEEAARIKRSGGRVFGLKDEPGVMRVWLPGENSPGLAMARSLGDMRLKRHGVIPAPEVTSRRVTGADLFMVLATDGVWDVLSNEEVVSIVCATPRKQHASKAVVEAAVQRWRAKFPTSRVDDCSAVCLFLHDHTLGTAAAASAAAAAAARKARRASTATPPAS.

In terms of domain architecture, PPM-type phosphatase spans V42 to L356. Mn(2+) is bound by residues D77 and G78. The segment at A119–S145 is disordered. Positions S121–S145 are enriched in low complexity. 2 residues coordinate Mn(2+): D301 and D347.

The protein belongs to the PP2C family. Requires Mg(2+) as cofactor. Mn(2+) is required as a cofactor.

The enzyme catalyses O-phospho-L-seryl-[protein] + H2O = L-seryl-[protein] + phosphate. It catalyses the reaction O-phospho-L-threonyl-[protein] + H2O = L-threonyl-[protein] + phosphate. The protein is Probable protein phosphatase 2C 12 of Oryza sativa subsp. japonica (Rice).